The following is a 246-amino-acid chain: Large ribosomal subunit protein uL30 (246 aa).

The protein belongs to the universal ribosomal protein uL30 family.

Its function is as follows. Binds to G-rich structures in 28S rRNA and in mRNAs. Plays a regulatory role in the translation apparatus; inhibits cell-free translation of mRNAs. The chain is Large ribosomal subunit protein uL30 (rpl7) from Dictyostelium discoideum (Social amoeba).